Consider the following 158-residue polypeptide: Endoribonuclease YbeY (158 aa).

The Zn(2+) site is built by H119, H123, and H129.

It belongs to the endoribonuclease YbeY family. Requires Zn(2+) as cofactor.

The protein localises to the cytoplasm. Functionally, single strand-specific metallo-endoribonuclease involved in late-stage 70S ribosome quality control and in maturation of the 3' terminus of the 16S rRNA. This chain is Endoribonuclease YbeY, found in Acinetobacter baumannii (strain ACICU).